We begin with the raw amino-acid sequence, 198 residues long: Recombination protein RecR (198 aa).

A C4-type zinc finger spans residues 57-72 (CSLCGNLDTVDPCHIC). Positions 80–175 (GLICVVETVG…TVTRVGHGVP (96 aa)) constitute a Toprim domain.

Belongs to the RecR family.

In terms of biological role, may play a role in DNA repair. It seems to be involved in an RecBC-independent recombinational process of DNA repair. It may act with RecF and RecO. The chain is Recombination protein RecR from Gluconobacter oxydans (strain 621H) (Gluconobacter suboxydans).